The primary structure comprises 468 residues: Glutamate--tRNA ligase 2 (468 aa).

Residues 9–19 carry the 'HIGH' region motif; the sequence is PSPTGFLHIGG. Residues 238-242 carry the 'KMSKS' region motif; sequence KLSKR. K241 contributes to the ATP binding site.

The protein belongs to the class-I aminoacyl-tRNA synthetase family. Glutamate--tRNA ligase type 1 subfamily. As to quaternary structure, monomer.

It is found in the cytoplasm. It carries out the reaction tRNA(Glu) + L-glutamate + ATP = L-glutamyl-tRNA(Glu) + AMP + diphosphate. Its function is as follows. Catalyzes the attachment of glutamate to tRNA(Glu) in a two-step reaction: glutamate is first activated by ATP to form Glu-AMP and then transferred to the acceptor end of tRNA(Glu). The chain is Glutamate--tRNA ligase 2 from Rhodospirillum rubrum (strain ATCC 11170 / ATH 1.1.1 / DSM 467 / LMG 4362 / NCIMB 8255 / S1).